We begin with the raw amino-acid sequence, 598 residues long: Nuclear receptor subfamily 4 group A member 2 (598 aa).

Positions 1–22 (MPCVQAQYGSSPQGASPASQSY) are disordered. The span at 8 to 22 (YGSSPQGASPASQSY) shows a compositional bias: low complexity. The segment at residues 260-335 (EGLCAVCGDN…VGMVKEVVRT (76 aa)) is a DNA-binding region (nuclear receptor). 2 NR C4-type zinc fingers span residues 263–283 (CAVCGDNAACQHYGVRTCEGC) and 299–323 (CLANKNCPVDKRRRNRCQYCRFQKC). Positions 287 to 314 (FKRTVQKNAKYVCLANKNCPVDKRRRNR) match the Bipartite nuclear localization signal (NLS1) motif. The segment at 337 to 361 (SLKGRRGRLPSKPKSPQDPSPPSPP) is disordered. The Nuclear localization signal (NLS1) motif lies at 338-350 (LKGRRGRLPSKPK). Over residues 352–361 (PQDPSPPSPP) the composition is skewed to pro residues. The 236-residue stretch at 360–595 (PPVSLISALV…AIIDKLFLDT (236 aa)) folds into the NR LBD domain. The short motif at 443-452 (FLELFVLRLA) is the nuclear export sequence (NES1) element. A nuclear export sequence (NES2) motif is present at residues 568–577 (QGLQRIFYLK).

This sequence belongs to the nuclear hormone receptor family. NR4 subfamily. As to quaternary structure, interacts with SFPQ, NCOR2, SIN3A and HADC1. The interaction with NCOR2 increases in the absence of PITX3. Interacts with PER2. Shows a ubiquitous distribution in the cerebral cortex, hippocampus, thalamus, amygdala, and midbrain. Expression increases in prenatally stressed adult offspring in the ventral tegmental area, whereas no changes are observed in the substantia nigra area (at protein level). Not expressed in quiescent liver but is rapidly induced following partial hepatectomy and is specific to hepatic growth as it is not induced in other mitogen-treated cells. Expressed at very low levels in the lung, spleen and stomach and at high levels in the brain.

Its subcellular location is the cytoplasm. It is found in the nucleus. Transcriptional regulator which is important for the differentiation and maintenance of meso-diencephalic dopaminergic (mdDA) neurons during development. It is crucial for expression of a set of genes such as SLC6A3, SLC18A2, TH and DRD2 which are essential for development of mdDA neurons. May confer liver-specific regulation of delayed-early genes induced later in the G1 phase of regeneration along with NR4A1. This chain is Nuclear receptor subfamily 4 group A member 2 (Nr4a2), found in Rattus norvegicus (Rat).